The sequence spans 230 residues: uncharacterized protein (230 aa).

Positions 1-21 (MARYDARLRGIGKAHACSAFA) are cleaved as a signal peptide. Residues 47-190 (SASVQENFIA…TVQTSSSGDP (144 aa)) are disordered. A compositionally biased stretch (polar residues) spans 141 to 150 (PQSQTSANSQ). Over residues 151-165 (KKPEIRCRERSKNAR) the composition is skewed to basic and acidic residues. A compositionally biased stretch (polar residues) spans 173 to 188 (AVATNEAETVQTSSSG).

It to R.meliloti RA0936 and y4aO.

This is an uncharacterized protein from Sinorhizobium fredii (strain NBRC 101917 / NGR234).